The sequence spans 267 residues: Protein isy-1 (267 aa).

Residues 175 to 204 (LEKLIEEKNIERINKEFAEKQAQKQQTASD) are a coiled coil. Residues 195–221 (QAQKQQTASDAAPENIYKVEEDDDDDL) are disordered.

Belongs to the ISY1 family. Ubiquitously expressed.

The protein localises to the nucleus. In terms of biological role, regulates the processing of the mir-60 microRNA (miRNA), which in turn negatively regulates the expression of the transcription factor zip-10. Does not affect the splicing of zip-10. The protein is Protein isy-1 of Caenorhabditis elegans.